The chain runs to 212 residues: Probable transaldolase (212 aa).

Lys-83 functions as the Schiff-base intermediate with substrate in the catalytic mechanism.

This sequence belongs to the transaldolase family. Type 3B subfamily.

The protein resides in the cytoplasm. The enzyme catalyses D-sedoheptulose 7-phosphate + D-glyceraldehyde 3-phosphate = D-erythrose 4-phosphate + beta-D-fructose 6-phosphate. It functions in the pathway carbohydrate degradation; pentose phosphate pathway; D-glyceraldehyde 3-phosphate and beta-D-fructose 6-phosphate from D-ribose 5-phosphate and D-xylulose 5-phosphate (non-oxidative stage): step 2/3. Functionally, transaldolase is important for the balance of metabolites in the pentose-phosphate pathway. The sequence is that of Probable transaldolase (tal) from Halalkalibacterium halodurans (strain ATCC BAA-125 / DSM 18197 / FERM 7344 / JCM 9153 / C-125) (Bacillus halodurans).